The sequence spans 316 residues: Ecto-ADP-ribosyltransferase 5 (316 aa).

The first 23 residues, 1–23 (MIQATLLISLSCLSFYTLGSGVR), serve as a signal peptide directing secretion. The cysteines at positions 50 and 266 are disulfide-linked. The N-linked (GlcNAc...) asparagine glycan is linked to N68. The 192-residue stretch at 70–261 (TRLRESWETA…MTLSSSDQMC (192 aa)) folds into the TR mART core domain. Y107 is a binding site for NAD(+). A glycan (N-linked (GlcNAc...) asparagine) is linked at N109. Positions 168 and 188 each coordinate NAD(+). R168 is a catalytic residue. S191 is a catalytic residue. S222 lines the NAD(+) pocket. E229 is an active-site residue. Residues N242 and N248 are each glycosylated (N-linked (GlcNAc...) asparagine).

Belongs to the Arg-specific ADP-ribosyltransferase family.

Its subcellular location is the secreted. It localises to the membrane. It catalyses the reaction L-arginyl-[protein] + NAD(+) = N(omega)-(ADP-D-ribosyl)-L-arginyl-[protein] + nicotinamide + H(+). This Bos taurus (Bovine) protein is Ecto-ADP-ribosyltransferase 5 (ART5).